The sequence spans 1954 residues: Chromodomain-helicase-DNA-binding protein 5 (1954 aa).

2 disordered regions span residues 1 to 134 (MRGP…PKSS) and 225 to 338 (PLAV…GDGY). Acidic residues-rich tracts occupy residues 17 to 37 (EEME…EAFD) and 72 to 90 (NDEL…ESEG). The span at 96-115 (NKKKKKKLKDKKEKKAKRKK) shows a compositional bias: basic residues. Positions 227 to 237 (AVSPPQVPQPV) are enriched in pro residues. Basic residues predominate over residues 251 to 272 (GVRKKIKGSKDGKKKGKGKKTA). Residues 291 to 301 (SEEDEREESDF) are compositionally biased toward acidic residues. Residues 321-330 (KKSKRRRKKK) are compositionally biased toward basic residues. PHD-type zinc fingers lie at residues 343–390 (QDYC…CEKE) and 416–463 (MEFC…CTCP). The segment at 343–653 (QDYCEVCQQG…HRELMLGEDT (311 aa)) is histone-binding. The Chromo 1 domain occupies 497 to 554 (LPPPKPLEGIPEREFFVKWAGLSYWHCSWVKELQLELYHTVMYRNYQRKNDMDEPPPF). The disordered stretch occupies residues 549–571 (DEPPPFDYGSGDEDGKSEKRKNK). The segment covering 561-571 (EDGKSEKRKNK) has biased composition (basic and acidic residues). The 62-residue stretch at 592 to 653 (MMIHRILNHS…HRELMLGEDT (62 aa)) folds into the Chromo 2 domain. Positions 712-896 (RFSWAQGTDT…FHLLNFLTPE (185 aa)) constitute a Helicase ATP-binding domain. 725–732 (DEMGLGKT) contributes to the ATP binding site. The short motif at 847-850 (DEAH) is the DEAH box element. The Helicase C-terminal domain occupies 1028–1193 (LLQKMLKKLR…MTKQELDDIL (166 aa)). Disordered regions lie at residues 1209 to 1253 (MSQG…EDSS), 1351 to 1411 (YNDA…LPPL), 1524 to 1564 (YSTP…APLG), 1597 to 1640 (AALD…REEV), and 1658 to 1696 (SRGD…KKED). 2 stretches are compositionally biased toward acidic residues: residues 1355–1366 (SQEDQEWQDELS) and 1376–1385 (SEDEDEDFEE). An N5-methylglutamine modification is found at Q1390. Phosphoserine is present on S1554. Residues 1554-1564 (SPAHLLPAPLG) show a composition bias toward low complexity. Composition is skewed to basic and acidic residues over residues 1600 to 1627 (DRVE…ETEK) and 1658 to 1678 (SRGD…KEPI).

The protein belongs to the SNF2/RAD54 helicase family. Component of the nucleosome remodeling and deacetylase (NuRD) repressor complex, composed of core proteins MTA1, MTA2, MTA3, RBBP4, RBBP7, HDAC1, HDAC2, MBD2, MBD3, and peripherally associated proteins CDK2AP1, CDK2AP2, GATAD2A, GATAD2B, CHD3, CHD4 and CHD5. The exact stoichiometry of the NuRD complex is unknown, and some subunits such as MBD2 and MBD3, GATAD2A and GATAD2B, and CHD3, CHD4 and CHD5 define mutually exclusive NuRD complexes. Interacts with HDAC2. Methylated at Gln-1390 by N6AMT1. As to expression, preferentially expressed in total brain, fetal brain, and cerebellum. It is also moderately expressed in the adrenal gland and detected in testis.

The protein resides in the nucleus. It is found in the chromosome. It carries out the reaction ATP + H2O = ADP + phosphate + H(+). Its function is as follows. ATP-dependent chromatin-remodeling factor that binds DNA through histones and regulates gene transcription. May specifically recognize and bind trimethylated 'Lys-27' (H3K27me3) and non-methylated 'Lys-4' of histone H3. Acts as a component of the histone deacetylase NuRD complex which participates in the remodeling of chromatin. Plays a role in the development of the nervous system by activating the expression of genes promoting neuron terminal differentiation. In parallel, it may also positively regulate the trimethylation of histone H3 at 'Lys-27' thereby specifically repressing genes that promote the differentiation into non-neuronal cell lineages. Regulates the expression of genes involved in cell proliferation and differentiation. Downstream activated genes may include CDKN2A that positively regulates the p53/TP53 pathway, which in turn, prevents cell proliferation. In spermatogenesis, it probably regulates histone hyperacetylation and the replacement of histones by transition proteins in chromatin, a crucial step in the condensation of spermatid chromatin and the production of functional spermatozoa. The sequence is that of Chromodomain-helicase-DNA-binding protein 5 from Homo sapiens (Human).